The primary structure comprises 184 residues: RNA 2',3'-cyclic phosphodiesterase (184 aa).

Residue histidine 40 is the Proton donor of the active site. Short sequence motifs (HXTX) lie at residues 40–43 and 125–128; these read HITL. Catalysis depends on histidine 125, which acts as the Proton acceptor.

The protein belongs to the 2H phosphoesterase superfamily. ThpR family.

It catalyses the reaction a 3'-end 2',3'-cyclophospho-ribonucleotide-RNA + H2O = a 3'-end 2'-phospho-ribonucleotide-RNA + H(+). Functionally, hydrolyzes RNA 2',3'-cyclic phosphodiester to an RNA 2'-phosphomonoester. In vitro, ligates 5' and 3' half-tRNA molecules with 2',3'-cyclic phosphate and 5'-hydroxyl termini, respectively, to the product containing the 2'-5' phosphodiester linkage. Ligase activity requires GTP, but GTP hydrolysis is not required for the reaction, which is reversible. Ligase activity is weak compared to the phosphodiesterase activity. This Pyrococcus furiosus (strain ATCC 43587 / DSM 3638 / JCM 8422 / Vc1) protein is RNA 2',3'-cyclic phosphodiesterase.